The primary structure comprises 393 residues: Myb-related transcription factor, partner of profilin (393 aa).

Over residues 1 to 11 the composition is skewed to low complexity; it reads MASATAAAAPG. Positions 1 to 21 are disordered; it reads MASATAAAAPGEAEETTRLRK. In terms of domain architecture, Myb-like spans 16 to 88; that stretch reads TTRLRKPRFS…EVQKRWNDFK (73 aa). Residues 87 to 90 carry the Nuclear localization signal motif; that stretch reads FKRR. 3 disordered regions span residues 125-254, 290-323, and 348-393; these read GPGV…EQSL, PLLP…APKV, and IISP…WKSP. Over residues 142 to 157 the composition is skewed to low complexity; that stretch reads AAASSQPQASTASTQR. Over residues 160–171 the composition is skewed to basic and acidic residues; that stretch reads LSEDRRQDRRAD. The segment covering 173 to 184 has biased composition (polar residues); that stretch reads PAQSKGGSSSPE. Pro residues-rich tracts occupy residues 219–229, 238–247, 296–320, and 359–368; these read PPLPAPPPPPT, SPSPTPPRPT, PADP…PPSA, and KPLPPAPPLP. Over residues 375–393 the composition is skewed to basic residues; that stretch reads HKRRKGFPTRKRRGRWKSP. Short sequence motifs (nuclear localization signal) lie at residues 376 to 379 and 384 to 387; these read KRRK and RKRR.

As to quaternary structure, interacts with PFN1. Homodimer and heterodimer with PFN1. Ubiquitous. Highly expressed in brain, liver and testis. Moderate expression in heart, lung and skeletal muscle. Low expression in spleen and kidney.

The protein localises to the nucleus. Transcriptional repressor; DNA-binding protein that specifically recognizes the core sequence 5'-YAAC[GT]G-3'. Dimerization with PFN1 reduces its DNA-binding capacity. This Mus musculus (Mouse) protein is Myb-related transcription factor, partner of profilin (Mypop).